The following is a 127-amino-acid chain: Glycine cleavage system H protein (127 aa).

In terms of domain architecture, Lipoyl-binding spans 24-105 (AALVGITDFA…YGEGWLVKIR (82 aa)). Lys-65 is subject to N6-lipoyllysine.

The protein belongs to the GcvH family. In terms of assembly, the glycine cleavage system is composed of four proteins: P, T, L and H. (R)-lipoate is required as a cofactor.

Functionally, the glycine cleavage system catalyzes the degradation of glycine. The H protein shuttles the methylamine group of glycine from the P protein to the T protein. This Chlorobium limicola (strain DSM 245 / NBRC 103803 / 6330) protein is Glycine cleavage system H protein.